A 331-amino-acid chain; its full sequence is Autoinducer 2 import system permease protein LsrD (331 aa).

A run of 10 helical transmembrane segments spans residues 7 to 27, 45 to 65, 67 to 87, 90 to 110, 118 to 138, 162 to 182, 212 to 232, 240 to 260, 261 to 281, and 288 to 308; these read YGWE…FGLS, ICIG…GIDI, FGST…AGVP, IAIP…AGLI, LVIT…LSGI, LLGL…FWLL, TLCL…VLLV, SDLG…GGAN, IYGG…VGYL, and IGTP…LVVV.

This sequence belongs to the binding-protein-dependent transport system permease family. AraH/RbsC subfamily. In terms of assembly, the complex is composed of two ATP-binding proteins (LsrA), two transmembrane proteins (LsrC and LsrD) and a solute-binding protein (LsrB).

Its subcellular location is the cell inner membrane. In terms of biological role, part of the ABC transporter complex LsrABCD involved in autoinducer 2 (AI-2) import. Probably responsible for the translocation of the substrate across the membrane. In Yersinia enterocolitica serotype O:8 / biotype 1B (strain NCTC 13174 / 8081), this protein is Autoinducer 2 import system permease protein LsrD (lsrD).